We begin with the raw amino-acid sequence, 909 residues long: Aconitate hydratase A (909 aa).

[4Fe-4S] cluster-binding residues include Cys-450, Cys-516, and Cys-519.

This sequence belongs to the aconitase/IPM isomerase family. Monomer. It depends on [4Fe-4S] cluster as a cofactor.

The enzyme catalyses citrate = D-threo-isocitrate. It carries out the reaction 3-hydroxybutane-1,2,3-tricarboxylate = 2-methyl-cis-aconitate + H2O. It participates in carbohydrate metabolism; tricarboxylic acid cycle; isocitrate from oxaloacetate: step 2/2. Its function is as follows. Involved in both the tricarboxylic acid (TCA) and methylcitric acid cycles. Catalyzes the reversible isomerization of citrate to isocitrate via cis-aconitate. Also catalyzes the rehydration of 2-methyl-cis-aconitate to produce 2-methylisocitrate. The apo form of AcnA functions as a RNA-binding regulatory protein which plays a role in the regulation of citrate concentration and in the sporulation. To prevent the accumulation of excessive levels of citrate, it binds near the 5' end of the citZ mRNA, decreasing its stability and thereby limiting the concentration of citrate synthase in the cell. Aconitase also binds to the gerE transcript late in sporulation and stabilizes it for translation, thereby increasing the rate and level of GerE protein accumulation. The sequence is that of Aconitate hydratase A (citB) from Bacillus subtilis (strain 168).